Consider the following 491-residue polypeptide: UDP-N-acetylmuramoyl-L-alanyl-D-glutamate--2,6-diaminopimelate ligase (491 aa).

S30 is a binding site for UDP-N-acetyl-alpha-D-muramoyl-L-alanyl-D-glutamate. ATP is bound at residue 108-114 (GTNGKTT). UDP-N-acetyl-alpha-D-muramoyl-L-alanyl-D-glutamate is bound by residues N149, 150–151 (TT), S177, and R185. The residue at position 217 (K217) is an N6-carboxylysine. Meso-2,6-diaminopimelate contacts are provided by residues R383, 407 to 410 (DNPR), G457, and E461. The short motif at 407 to 410 (DNPR) is the Meso-diaminopimelate recognition motif element.

It belongs to the MurCDEF family. MurE subfamily. The cofactor is Mg(2+). Post-translationally, carboxylation is probably crucial for Mg(2+) binding and, consequently, for the gamma-phosphate positioning of ATP.

The protein localises to the cytoplasm. The enzyme catalyses UDP-N-acetyl-alpha-D-muramoyl-L-alanyl-D-glutamate + meso-2,6-diaminopimelate + ATP = UDP-N-acetyl-alpha-D-muramoyl-L-alanyl-gamma-D-glutamyl-meso-2,6-diaminopimelate + ADP + phosphate + H(+). The protein operates within cell wall biogenesis; peptidoglycan biosynthesis. Functionally, catalyzes the addition of meso-diaminopimelic acid to the nucleotide precursor UDP-N-acetylmuramoyl-L-alanyl-D-glutamate (UMAG) in the biosynthesis of bacterial cell-wall peptidoglycan. The sequence is that of UDP-N-acetylmuramoyl-L-alanyl-D-glutamate--2,6-diaminopimelate ligase from Bacillus cereus (strain ATCC 14579 / DSM 31 / CCUG 7414 / JCM 2152 / NBRC 15305 / NCIMB 9373 / NCTC 2599 / NRRL B-3711).